Consider the following 299-residue polypeptide: Phosphoribosylaminoimidazole-succinocarboxamide synthase (299 aa).

The protein belongs to the SAICAR synthetase family.

The enzyme catalyses 5-amino-1-(5-phospho-D-ribosyl)imidazole-4-carboxylate + L-aspartate + ATP = (2S)-2-[5-amino-1-(5-phospho-beta-D-ribosyl)imidazole-4-carboxamido]succinate + ADP + phosphate + 2 H(+). The protein operates within purine metabolism; IMP biosynthesis via de novo pathway; 5-amino-1-(5-phospho-D-ribosyl)imidazole-4-carboxamide from 5-amino-1-(5-phospho-D-ribosyl)imidazole-4-carboxylate: step 1/2. The chain is Phosphoribosylaminoimidazole-succinocarboxamide synthase from Leifsonia xyli subsp. xyli (strain CTCB07).